The sequence spans 307 residues: GTPase Era (307 aa).

Positions 14-184 (HSGFVAIVGK…REQILDILPE (171 aa)) constitute an Era-type G domain. Residues 22–29 (GKPNVGKS) form a G1 region. 22 to 29 (GKPNVGKS) provides a ligand contact to GTP. The interval 48-52 (QTTRR) is G2. A G3 region spans residues 69–72 (DTPG). Residues 69-73 (DTPGL) and 131-134 (NKTD) each bind GTP. The G4 stretch occupies residues 131–134 (NKTD). Positions 162-164 (LSA) are G5. The 78-residue stretch at 215–292 (LREELPYAVA…FLGLEVIVIP (78 aa)) folds into the KH type-2 domain.

This sequence belongs to the TRAFAC class TrmE-Era-EngA-EngB-Septin-like GTPase superfamily. Era GTPase family. As to quaternary structure, monomer.

It is found in the cytoplasm. The protein localises to the cell membrane. Its function is as follows. An essential GTPase that binds both GDP and GTP, with rapid nucleotide exchange. Plays a role in 16S rRNA processing and 30S ribosomal subunit biogenesis and possibly also in cell cycle regulation and energy metabolism. The sequence is that of GTPase Era from Deinococcus deserti (strain DSM 17065 / CIP 109153 / LMG 22923 / VCD115).